Consider the following 316-residue polypeptide: BTB/POZ domain-containing adapter for CUL3-mediated RhoA degradation protein 2 (316 aa).

Positions 28-96 (KYVQLNVGGS…LRDDTITLPQ (69 aa)) constitute a BTB domain. Polar residues predominate over residues 268-279 (EATSRSRSQASP). The segment at 268-287 (EATSRSRSQASPSEDEETFE) is disordered. Position 278 is a phosphoserine (serine 278). Serine 280 is subject to Phosphoserine; by CK2.

Belongs to the BACURD family. Component of the BCR(TNFAIP1) E3 ubiquitin ligase complex, at least composed of CUL3, TNFAIP1/BACURD2 and RBX1. Interacts with RHOA; with a preference for RhoA-GDP. Interacts with RHOB. Interacts with PCNA. Interacts with CSNK2B. Phosphorylation at Ser-280 by CK2 facilitates the nucleus localization and increases interaction with PCNA.

The protein resides in the cytoplasm. Its subcellular location is the nucleus. It localises to the endosome. It participates in protein modification; protein ubiquitination. Substrate-specific adapter of a BCR (BTB-CUL3-RBX1) E3 ubiquitin-protein ligase complex involved in regulation of cytoskeleton structure. The BCR(TNFAIP1) E3 ubiquitin ligase complex mediates the ubiquitination of RHOA, leading to its degradation by the proteasome, thereby regulating the actin cytoskeleton and cell migration. Its interaction with RHOB may regulate apoptosis. May enhance the PCNA-dependent DNA polymerase delta activity. The chain is BTB/POZ domain-containing adapter for CUL3-mediated RhoA degradation protein 2 (TNFAIP1) from Homo sapiens (Human).